Consider the following 277-residue polypeptide: Large ribosomal subunit protein uL2c (277 aa).

2 disordered regions span residues 24–57 and 226–266; these read IVQS…RGGG and NAAD…HKYS.

The protein belongs to the universal ribosomal protein uL2 family. In terms of assembly, part of the 50S ribosomal subunit.

The protein resides in the plastid. The protein localises to the chloroplast. This chain is Large ribosomal subunit protein uL2c (rpl2), found in Zygnema circumcarinatum (Green alga).